A 1291-amino-acid chain; its full sequence is Histone-lysine N-methyltransferase SETDB1 (1291 aa).

Residues Glu-18 to Leu-64 adopt a coiled-coil conformation. Residues Arg-108–Asp-147 are disordered. Ser-112 and Ser-117 each carry phosphoserine. Thr-120 carries the post-translational modification Phosphothreonine. Residues Glu-124–Leu-133 show a composition bias toward acidic residues. A Glycyl lysine isopeptide (Lys-Gly) (interchain with G-Cter in SUMO2); alternate cross-link involves residue Lys-182. Lys-182 is covalently cross-linked (Glycyl lysine isopeptide (Lys-Gly) (interchain with G-Cter in ubiquitin); alternate). 2 consecutive Tudor domains span residues Lys-257–Thr-320 and Leu-347–Thr-403. The tract at residues Ser-404–Pro-545 is disordered. Residues Gln-433–Gln-444 show a composition bias toward polar residues. Residues Val-448 to Ser-468 show a composition bias toward pro residues. Over residues Glu-477–Val-515 the composition is skewed to polar residues. Positions Ser-528–Pro-539 are enriched in low complexity. In terms of domain architecture, MBD spans Tyr-594–Leu-665. Residues Val-727–Gly-800 enclose the Pre-SET domain. Cys-729, Cys-731, Cys-735, Cys-741, Cys-743, Cys-781, Cys-785, Cys-787, and Cys-792 together coordinate Zn(2+). In terms of domain architecture, SET spans Val-803 to Asn-1266. S-adenosyl-L-methionine is bound by residues Lys-813–Trp-815, Asp-851, and Tyr-853. Residue Lys-867 forms a Glycyl lysine isopeptide (Lys-Gly) (interchain with G-Cter in ubiquitin) linkage. The interval Glu-868–Ala-1160 is disordered. A compositionally biased stretch (acidic residues) spans Glu-896–Asp-907. A compositionally biased stretch (pro residues) spans Asp-951–Ile-963. A Phosphoserine modification is found at Ser-1025. Residues Ile-1031–Lys-1050 show a composition bias toward basic and acidic residues. A Glycyl lysine isopeptide (Lys-Gly) (interchain with G-Cter in SUMO2); alternate cross-link involves residue Lys-1032. Residue Lys-1032 forms a Glycyl lysine isopeptide (Lys-Gly) (interchain with G-Cter in SUMO1); alternate linkage. Lys-1038 is covalently cross-linked (Glycyl lysine isopeptide (Lys-Gly) (interchain with G-Cter in SUMO2)). Over residues Ser-1052 to Tyr-1063 the composition is skewed to polar residues. At Ser-1066 the chain carries Phosphoserine. Lys-1069 is covalently cross-linked (Glycyl lysine isopeptide (Lys-Gly) (interchain with G-Cter in SUMO2)). Residues Leu-1100–Ser-1115 are compositionally biased toward low complexity. Residues Arg-1116–Ser-1140 are compositionally biased toward polar residues. Lys-1149 is covalently cross-linked (Glycyl lysine isopeptide (Lys-Gly) (interchain with G-Cter in SUMO2)). N6,N6,N6-trimethyllysine; alternate occurs at positions 1170 and 1178. Lys-1170 and Lys-1178 each carry N6,N6-dimethyllysine; alternate. S-adenosyl-L-methionine contacts are provided by residues Arg-1220 and Asn-1223 to His-1224. Residues Cys-1226, Cys-1279, Cys-1281, and Cys-1286 each contribute to the Zn(2+) site. Positions Lys-1275–Leu-1291 constitute a Post-SET domain.

Belongs to the class V-like SAM-binding methyltransferase superfamily. Histone-lysine methyltransferase family. Suvar3-9 subfamily. Part of a complex containing at least CDYL, REST, WIZ, SETDB1, EHMT1 and EHMT2. Forms a complex with ATRX, TRIM28 and ZNF274. Probably part of a corepressor complex containing ZNF304, TRIM28, SETDB1 and DNMT1. Interacts with TRIM28/TIF1B. Interacts with ATF7IP and ATF7IP2; the interaction with ATF7IP protects SETDB1 from proteasomal degradation and is required to stimulate histone methyltransferase activity and facilitate the conversion of dimethylated to trimethylated H3 'Lys-9'. Interacts with CBX1 and CBX5. Interacts with DNMT3A and DNMT3B. Interacts with SUMO2. Interacts with MPHOSPH8. Interacts with ERG. Interacts with HDAC1, HDAC2, SIN3A and SIN3B. Interacts with ATRX. Interacts with RESF1. Interacts with ZNF638. Interacts with TASOR. Interacts with ZNF263; recruited to the SIX3 promoter along with other proteins involved in chromatin modification and transcriptional corepression where it contributes to transcriptional repression. Interacts with PHF13; the interaction probably enhances SETDB1 chromatin-associated levels and activity. Interacts with VRK1. Post-translationally, degraded by the proteasome, shielded by interaction with ATF7IP. In terms of processing, monoubiquitinated at Lys-867 by E2 enzymes of the UBE2E family. The conjugated-Ub is protected from deubiquitination by the SET domain. Monoubiquitination at Lys-867 is required for catalytic activity, H3K9 methylation and endogenous retrovirus silencing. As to expression, widely expressed. High expression in testis.

It is found in the nucleus. The protein localises to the cytoplasm. Its subcellular location is the chromosome. The catalysed reaction is N(6),N(6)-dimethyl-L-lysyl(9)-[histone H3] + S-adenosyl-L-methionine = N(6),N(6),N(6)-trimethyl-L-lysyl(9)-[histone H3] + S-adenosyl-L-homocysteine + H(+). Functionally, histone methyltransferase that specifically trimethylates 'Lys-9' of histone H3. H3 'Lys-9' trimethylation represents a specific tag for epigenetic transcriptional repression by recruiting HP1 (CBX1, CBX3 and/or CBX5) proteins to methylated histones. Mainly functions in euchromatin regions, thereby playing a central role in the silencing of euchromatic genes. H3 'Lys-9' trimethylation is coordinated with DNA methylation. Required for HUSH-mediated heterochromatin formation and gene silencing. Forms a complex with MBD1 and ATF7IP that represses transcription and couples DNA methylation and histone 'Lys-9' trimethylation. Its activity is dependent on MBD1 and is heritably maintained through DNA replication by being recruited by CAF-1. SETDB1 is targeted to histone H3 by TRIM28/TIF1B, a factor recruited by KRAB zinc-finger proteins. Probably forms a corepressor complex required for activated KRAS-mediated promoter hypermethylation and transcriptional silencing of tumor suppressor genes (TSGs) or other tumor-related genes in colorectal cancer (CRC) cells. Required to maintain a transcriptionally repressive state of genes in undifferentiated embryonic stem cells (ESCs). In ESCs, in collaboration with TRIM28, is also required for H3K9me3 and silencing of endogenous and introduced retroviruses in a DNA-methylation independent-pathway. Associates at promoter regions of tumor suppressor genes (TSGs) leading to their gene silencing. The SETDB1-TRIM28-ZNF274 complex may play a role in recruiting ATRX to the 3'-exons of zinc-finger coding genes with atypical chromatin signatures to establish or maintain/protect H3K9me3 at these transcriptionally active regions. The polypeptide is Histone-lysine N-methyltransferase SETDB1 (Homo sapiens (Human)).